A 129-amino-acid polypeptide reads, in one-letter code: MSYQFPDNLNYADTHEYVLEEEGLLKIGVSEFAIDQLGDIVFVELADQGATLEKGETFGTIESVKAVEEVYLPFSGEIVSVNESVIDNPELLQNDPIGEGWLVILKPESKVSIADLMTSEEYKSKVMPN.

One can recognise a Lipoyl-binding domain in the interval 24 to 106; that stretch reads LLKIGVSEFA…IGEGWLVILK (83 aa). K65 is subject to N6-lipoyllysine.

It belongs to the GcvH family. As to quaternary structure, the glycine cleavage system is composed of four proteins: P, T, L and H. The cofactor is (R)-lipoate.

In terms of biological role, the glycine cleavage system catalyzes the degradation of glycine. The H protein shuttles the methylamine group of glycine from the P protein to the T protein. The polypeptide is Glycine cleavage system H protein (Prochlorococcus marinus (strain MIT 9312)).